A 177-amino-acid chain; its full sequence is Disulfide bond formation protein B (177 aa).

Over 1-14 the chain is Cytoplasmic; that stretch reads MLALLKQFSEKRFV. Residues 15–31 form a helical membrane-spanning segment; that stretch reads WFLLAFSSLALESTALY. The Periplasmic segment spans residues 32–49; sequence FQYGMGLQPCVLCVYERL. The cysteines at positions 41 and 44 are disulfide-linked. The chain crosses the membrane as a helical span at residues 50–65; that stretch reads AMIGLFVAGIIALLQP. The Cytoplasmic segment spans residues 66-72; the sequence is LAFILRL. A helical transmembrane segment spans residues 73-90; that stretch reads IALALGLFSSIKGLLISF. Topologically, residues 91 to 145 are periplasmic; the sequence is RHLDLQMNPAPWKQCEFIPNFPETLPFHQWFPFIFNPTGSCNESQWSLFGLTMVQ. An intrachain disulfide couples Cys105 to Cys131. The helical transmembrane segment at 146–164 threads the bilayer; it reads WLVVIFSLYVVILTLLLIA. At 165-177 the chain is on the cytoplasmic side; sequence QVIKTRKQRRLFN.

It belongs to the DsbB family.

It localises to the cell inner membrane. Its function is as follows. Required for disulfide bond formation in some periplasmic proteins. Acts by oxidizing the DsbA protein. The chain is Disulfide bond formation protein B from Haemophilus influenzae (strain 86-028NP).